We begin with the raw amino-acid sequence, 252 residues long: Imidazole glycerol phosphate synthase subunit HisF (252 aa).

Catalysis depends on residues Asp13 and Asp132.

The protein belongs to the HisA/HisF family. In terms of assembly, heterodimer of HisH and HisF.

Its subcellular location is the cytoplasm. The enzyme catalyses 5-[(5-phospho-1-deoxy-D-ribulos-1-ylimino)methylamino]-1-(5-phospho-beta-D-ribosyl)imidazole-4-carboxamide + L-glutamine = D-erythro-1-(imidazol-4-yl)glycerol 3-phosphate + 5-amino-1-(5-phospho-beta-D-ribosyl)imidazole-4-carboxamide + L-glutamate + H(+). Its pathway is amino-acid biosynthesis; L-histidine biosynthesis; L-histidine from 5-phospho-alpha-D-ribose 1-diphosphate: step 5/9. In terms of biological role, IGPS catalyzes the conversion of PRFAR and glutamine to IGP, AICAR and glutamate. The HisF subunit catalyzes the cyclization activity that produces IGP and AICAR from PRFAR using the ammonia provided by the HisH subunit. The chain is Imidazole glycerol phosphate synthase subunit HisF from Campylobacter curvus (strain 525.92).